Reading from the N-terminus, the 305-residue chain is Taste receptor type 2 member 13 (305 aa).

Residues 1-7 (MGSSLYD) are Extracellular-facing. Residues 8 to 28 (ILTIVMIAEFIFGNVTNGFIV) form a helical membrane-spanning segment. Topologically, residues 29-42 (LTNCIAWLSKRTLS) are cytoplasmic. Residues 43 to 63 (FIGWIQLFLAISRVVLIWEML) traverse the membrane as a helical segment. At 64-88 (LAWLKYMKYSFSYLAGTELRVMMLT) the chain is on the extracellular side. Residues 89–109 (WVVSNHFSLWLATILSIFYLL) form a helical membrane-spanning segment. At 110–128 (KIASFSRPVFLYLKWRVKK) the chain is on the cytoplasmic side. Residues 129-149 (VLLLILLGNLIFLMFNILQIN) form a helical membrane-spanning segment. The Extracellular segment spans residues 150–182 (THIEDWMDQYKRNITWDSRVNEFVGFSNLVLLE). Asparagine 162 is a glycosylation site (N-linked (GlcNAc...) asparagine). Residues 183–203 (MIMFSVTPFTVALVSFILLIF) form a helical membrane-spanning segment. Over 204-232 (SLWKHLQKMHLSSRGERDPSTKAHVNALR) the chain is Cytoplasmic. Residues 233-253 (IMVSFLLLYATYFISFFISLI) form a helical membrane-spanning segment. Residues 254–262 (PMAHKKGLD) are Extracellular-facing. A helical membrane pass occupies residues 263–283 (LMFSLTVGLFYPSSHSFILIL). Residues 284-305 (GHSNLRHSSCLVITYLRCKEKD) are Cytoplasmic-facing.

Belongs to the G-protein coupled receptor T2R family. Expressed in subsets of taste receptor cells of the tongue and palate epithelium and exclusively in gustducin-positive cells. Expressed in 15% taste bud cells in circumvallate and foliate papillae but only in 2% in fungiform papillae. Expressed in the duodenum, antrum and fundus (part of the stomach).

The protein localises to the membrane. Functionally, receptor that may play a role in the perception of bitterness and is gustducin-linked. May play a role in sensing the chemical composition of the gastrointestinal content. The activity of this receptor may stimulate alpha gustducin, mediate PLC-beta-2 activation and lead to the gating of TRPM5. The protein is Taste receptor type 2 member 13 (Tas2r13) of Rattus norvegicus (Rat).